A 363-amino-acid chain; its full sequence is G-protein coupled receptor 78 (363 aa).

At 1–7 the chain is on the extracellular side; the sequence is MGPGEAL. A helical membrane pass occupies residues 8–28; the sequence is LAGLLVMVLAVALLSNALVLL. At 29–47 the chain is on the cytoplasmic side; that stretch reads CCAYSAELRTRASGVLLVN. The chain crosses the membrane as a helical span at residues 48-68; sequence LSLGHLLLAALDMPFTLLGVM. Residues 69–80 lie on the Extracellular side of the membrane; it reads RGRTPSAPGACQ. Cysteine 79 and cysteine 156 are joined by a disulfide. A helical membrane pass occupies residues 81-101; the sequence is VIGFLDTFLASNAALSVAALS. Residues 102–122 lie on the Cytoplasmic side of the membrane; that stretch reads ADQWLAVGFPLRYAGRLRPRY. A helical membrane pass occupies residues 123-143; that stretch reads AGLLLGCAWGQSLAFSGAALG. Residues 144 to 168 are Extracellular-facing; it reads CSWLGYSSAFASCSLRLPPEPERPR. A helical transmembrane segment spans residues 169–189; the sequence is FAAFTATLHAVGFVLPLAVLC. Residues 190–242 are Cytoplasmic-facing; sequence LTSLQVHRVARRHCQRMDTVTMKALALLADLHPSVRQRCLIQQKRRRHRATRK. A helical transmembrane segment spans residues 243 to 263; the sequence is IGIAIATFLICFAPYVMTRLA. The Extracellular segment spans residues 264–277; it reads ELVPFVTVNAQWGI. The chain crosses the membrane as a helical span at residues 278 to 297; it reads LSKCLTYSKAVADPFTYSLL. Over 298–363 the chain is Cytoplasmic; sequence RRPFRQVLAG…ENDSCLQQTH (66 aa). Residues 340–363 are disordered; it reads TPRPASTHNGSVDTENDSCLQQTH. Over residues 343–363 the composition is skewed to polar residues; the sequence is PASTHNGSVDTENDSCLQQTH.

It belongs to the G-protein coupled receptor 1 family. High level of expression in placenta. Expressed throughout the brain at low level. No expression detected in skeletal muscle, lung, heart, liver, pancreas, or kidney.

Its subcellular location is the cell membrane. Orphan receptor. Displays a significant level of constitutive activity. Its effect is mediated by G(s)-alpha protein that stimulate adenylate cyclase, resulting in an elevation of intracellular cAMP. The chain is G-protein coupled receptor 78 (GPR78) from Homo sapiens (Human).